A 374-amino-acid polypeptide reads, in one-letter code: All-trans-retinol dehydrogenase [NAD(+)] ADH7 (374 aa).

The residue at position 1 (Met1) is an N-acetylmethionine. The Zn(2+) site is built by Cys47, His68, Cys98, Cys101, Cys104, Cys112, and Cys174. Residues 199-204 (GLGGVG), Asp223, Lys228, 292-294 (VGA), and Arg369 each bind NAD(+).

It belongs to the zinc-containing alcohol dehydrogenase family. Class-IV subfamily. As to quaternary structure, homodimer. Zn(2+) serves as cofactor. In terms of tissue distribution, preferentially expressed in stomach.

Its subcellular location is the cytoplasm. The enzyme catalyses a primary alcohol + NAD(+) = an aldehyde + NADH + H(+). It catalyses the reaction 10-hydroxydecanoate + NAD(+) = 10-oxodecanoate + NADH + H(+). The catalysed reaction is all-trans-retinol + NAD(+) = all-trans-retinal + NADH + H(+). It carries out the reaction 9-cis-retinol + NAD(+) = 9-cis-retinal + NADH + H(+). The enzyme catalyses all-trans-3,4-didehydroretinol + NAD(+) = all-trans-3,4-didehydroretinal + NADH + H(+). It catalyses the reaction all-trans-4-hydroxyretinol + NAD(+) = all-trans-4-hydroxyretinal + NADH + H(+). The catalysed reaction is all-trans-4-oxoretinol + NAD(+) = all-trans-4-oxoretinal + NADH + H(+). It carries out the reaction 12-hydroxydodecanoate + NAD(+) = 12-oxododecanoate + NADH + H(+). The enzyme catalyses 16-hydroxyhexadecanoate + NAD(+) = 16-oxohexadecanoate + NADH + H(+). It catalyses the reaction hexan-1-ol + NAD(+) = hexanal + NADH + H(+). The catalysed reaction is (E)-hex-2-en-1-ol + NAD(+) = (E)-hex-2-enal + NADH + H(+). It carries out the reaction (E)-4-hydroxynon-2-en-1-ol + NAD(+) = (E)-4-hydroxynon-2-enal + NADH + H(+). Retinol oxidation is inhibited by the detergent Tween 80. Ethanol inhibits both all-trans-retinol and 9-cis-retinol oxidation. 13-cis-retinol is an effective competitive inhibitor of the 9-cis-retinol oxidation. All-trans-retinoic acid is a powerful inhibitor of all-trans-retinol oxidation. 13-cis-retinoic acid is a powerful inhibitor of all-trans-retinol oxidation. Cimetidine and ranitidine inhibited ethanol oxidation. Its function is as follows. Catalyzes the NAD-dependent oxidation of all-trans-retinol, alcohol, aldehyde and omega-hydroxy fatty acids and their derivatives. Oxidizes preferentially all trans-retinol, all-trans-4-hydroxyretinol, 9-cis-retinol, 2-hexenol, and long chain omega-hydroxy fatty acids such as juniperic acid. In vitro can also catalyze the NADH-dependent reduction of all-trans-retinal and aldehydes and their derivatives. Reduces preferentially all trans-retinal, all-trans-4-oxoretinal and hexanal. Catalyzes in the oxidative direction with higher efficiency. Therefore may participate in retinoid metabolism, fatty acid omega-oxidation, and elimination of cytotoxic aldehydes produced by lipid peroxidation. This chain is All-trans-retinol dehydrogenase [NAD(+)] ADH7 (Adh7), found in Rattus norvegicus (Rat).